The following is a 329-amino-acid chain: Beta-ketoacyl-[acyl-carrier-protein] synthase III (329 aa).

Residues C123 and H256 contribute to the active site. Positions 257–261 (QANIR) are ACP-binding. The active site involves N286.

The protein belongs to the thiolase-like superfamily. FabH family. As to quaternary structure, homodimer.

The protein resides in the cytoplasm. It carries out the reaction malonyl-[ACP] + acetyl-CoA + H(+) = 3-oxobutanoyl-[ACP] + CO2 + CoA. It participates in lipid metabolism; fatty acid biosynthesis. In terms of biological role, catalyzes the condensation reaction of fatty acid synthesis by the addition to an acyl acceptor of two carbons from malonyl-ACP. Catalyzes the first condensation reaction which initiates fatty acid synthesis and may therefore play a role in governing the total rate of fatty acid production. Possesses both acetoacetyl-ACP synthase and acetyl transacylase activities. Its substrate specificity determines the biosynthesis of branched-chain and/or straight-chain of fatty acids. This Burkholderia mallei (strain NCTC 10247) protein is Beta-ketoacyl-[acyl-carrier-protein] synthase III.